Here is an 888-residue protein sequence, read N- to C-terminus: Extra-large guanine nucleotide-binding protein 1 (888 aa).

The interval 98–119 is disordered; the sequence is SVIEHTEEEEEEEGGDGEDCEL. Over residues 103–118 the composition is skewed to acidic residues; sequence TEEEEEEEGGDGEDCE. A Nuclear localization signal motif is present at residues 205–222; sequence RRVRVVPVKKQPQTKGKK. The RING-type; degenerate zinc-finger motif lies at 225 to 268; it reads CYRCFKGSRFTEKEVCLVCDAKYCNSCVLRAMGSMPEGRKCVTC. The G-alpha domain occupies 482–879; it reads TLQKILLVGN…NICMSEYSMY (398 aa). The tract at residues 485–498 is G1 motif; that stretch reads KILLVGNSGSGTST. GTP is bound by residues 490 to 498 and 661 to 669; these read GNSGSGTST and DILYAEGVT. Positions 497 and 669 each coordinate Ca(2+). Positions 661 to 669 are G2 motif; it reads DILYAEGVT. Positions 702–711 are G3 motif; the sequence is YQLIRVPSRG. The segment at 770-777 is G4 motif; the sequence is LLILNKYD. 774-777 is a binding site for GTP; that stretch reads NKYD. The interval 843 to 848 is G5 motif; sequence SKSLDP.

It belongs to the G-alpha family. XLG subfamily. Ca(2+) is required as a cofactor. Ubiquitous. Strongly expressed in vascular tissues, root and shoot meristems and lateral root primordia.

Its subcellular location is the nucleus. Functionally, guanine nucleotide-binding proteins (G proteins) are involved as modulators or transducers in various transmembrane signaling systems. Binds GTP with specificity. Plays a role in the root morphogenesis by regulation of the cell proliferation. The chain is Extra-large guanine nucleotide-binding protein 1 (XLG1) from Arabidopsis thaliana (Mouse-ear cress).